The chain runs to 284 residues: uncharacterized protein (284 aa).

It belongs to the methyltransferase superfamily.

It is found in the cytoplasm. Its subcellular location is the nucleus. In terms of biological role, probable methyltransferase. This is an uncharacterized protein from Schizosaccharomyces pombe (strain 972 / ATCC 24843) (Fission yeast).